A 371-amino-acid chain; its full sequence is Putative glutamate--cysteine ligase 2 (371 aa).

The protein belongs to the glutamate--cysteine ligase type 2 family. YbdK subfamily.

The catalysed reaction is L-cysteine + L-glutamate + ATP = gamma-L-glutamyl-L-cysteine + ADP + phosphate + H(+). ATP-dependent carboxylate-amine ligase which exhibits weak glutamate--cysteine ligase activity. In Burkholderia mallei (strain NCTC 10247), this protein is Putative glutamate--cysteine ligase 2.